The following is a 371-amino-acid chain: S-adenosylmethionine:tRNA ribosyltransferase-isomerase (371 aa).

The protein belongs to the QueA family. As to quaternary structure, monomer.

The protein resides in the cytoplasm. The catalysed reaction is 7-aminomethyl-7-carbaguanosine(34) in tRNA + S-adenosyl-L-methionine = epoxyqueuosine(34) in tRNA + adenine + L-methionine + 2 H(+). It functions in the pathway tRNA modification; tRNA-queuosine biosynthesis. In terms of biological role, transfers and isomerizes the ribose moiety from AdoMet to the 7-aminomethyl group of 7-deazaguanine (preQ1-tRNA) to give epoxyqueuosine (oQ-tRNA). In Prochlorococcus marinus (strain MIT 9313), this protein is S-adenosylmethionine:tRNA ribosyltransferase-isomerase.